The chain runs to 232 residues: DOA4-independent degradation protein 4 (232 aa).

Positions 14-97 (PQERLKKNQR…AISLRIQAVR (84 aa)) form a coiled coil. Residues 183–232 (LQSTPQNLVSNAPIAETAMGIPEPIGAGSEFHGNPDDDLQARLNTLKKQT) are interaction with VPS4. Residues 203 to 232 (IPEPIGAGSEFHGNPDDDLQARLNTLKKQT) are disordered. The MIT-interacting motif signature appears at 219–229 (DDLQARLNTLK).

The protein belongs to the SNF7 family. In terms of assembly, core component of the ESCRT-III complex (endosomal sorting required for transport complex III). ESCRT-III appears to be sequentially assembled as a flat lattice on the endosome membrane and forms a transient 450 kDa complex that contains DID4, oligomerized SNF7, VPS20 and VPS24. SNF7 oligomerization into a membrane-associated filament is nucleated by association of SNF7 with VPS20; the process is terminated through association of VPS24, possibly by capping the SNF7 filament. VPS24 subsequently associates with DID4/VPS2.

Its subcellular location is the cytoplasm. It is found in the endosome membrane. Functionally, required for the sorting and concentration of proteins resulting in the entry of these proteins into the invaginating vesicles of the multivesicular body (MVB). Acts a component of the ESCRT-III complex, which appears to be critical for late steps in MVB sorting, such as membrane invagination and final cargo sorting and recruitment of late-acting components of the sorting machinery. The MVB pathway requires the sequential function of ESCRT-O, -I,-II and -III complex assemblies. Can directly stimulate VPS4 ATPase activity. The DID4/VPS2-VPS24 subcomplex is required for the VPS4-dependent dissociation of ESCRT-III. The chain is DOA4-independent degradation protein 4 (DID4) from Saccharomyces cerevisiae (strain ATCC 204508 / S288c) (Baker's yeast).